Reading from the N-terminus, the 94-residue chain is Sucrose operon repressor (94 aa).

In terms of domain architecture, HTH lacI-type spans 1–56 (MASLHDVARLAGVSKSTVSRVINDEYGVKEATKQKVRQAVAECGYVPNQVAKDLKE). The H-T-H motif DNA-binding region spans 4-23 (LHDVARLAGVSKSTVSRVIN).

Its function is as follows. Repressor for the scr operon. Binds D-fructose as an inducer. This Vibrio alginolyticus protein is Sucrose operon repressor (scrR).